The sequence spans 347 residues: D-alanine--D-alanine ligase (347 aa).

The ATP-grasp domain maps to 134 to 332 (KLYAKDLGVK…LAQSLPKTPK (199 aa)). Residue 161–216 (LIGFNFPFIIKPSNAGSSLGVSVVKEEKELIYALDGAFEYSKEILIEPFIQGVKEY) participates in ATP binding. Mg(2+)-binding residues include D288, E300, and N302.

It belongs to the D-alanine--D-alanine ligase family. Requires Mg(2+) as cofactor. Mn(2+) serves as cofactor.

The protein localises to the cytoplasm. It catalyses the reaction 2 D-alanine + ATP = D-alanyl-D-alanine + ADP + phosphate + H(+). The protein operates within cell wall biogenesis; peptidoglycan biosynthesis. Functionally, cell wall formation. This chain is D-alanine--D-alanine ligase, found in Helicobacter pylori (strain Shi470).